The chain runs to 394 residues: Xylose isomerase (394 aa).

Residues His54 and Asp57 contribute to the active site. The Mg(2+) site is built by Glu181, Glu217, His220, Asp245, Asp255, Asp257, and Asp292.

The protein belongs to the xylose isomerase family. In terms of assembly, homotetramer. The cofactor is Mg(2+).

It localises to the cytoplasm. The catalysed reaction is alpha-D-xylose = alpha-D-xylulofuranose. The sequence is that of Xylose isomerase (xylA) from Actinoplanes sp. (strain ATCC 31351 / 3876) (Ampullariella sp.).